The chain runs to 211 residues: MRFFLWNAILALWVTVLSGALIPEPEVKIEVLQKPFICHRKTKGGDLMLVHYEGYLEKDGSLFHSTHKHNNGQPVWFTLGILEVLKGWDQGLKGMCVGEKRKLTVPPALGYGKEGKGKIPPESTLIFNIDLLEIRNGPRSHESFQEMDLNDDWRLSKHEVKVYLQKEFEKHGAVVNESHHDALVEDIFDKEDEDKDGFISAREFTYVHDEL.

The first 19 residues, 1–19 (MRFFLWNAILALWVTVLSG), serve as a signal peptide directing secretion. A disulfide bond links C38 and C96. One can recognise a PPIase FKBP-type domain in the interval 45 to 135 (GDLMLVHYEG…IFNIDLLEIR (91 aa)). The region spanning 135–170 (RNGPRSHESFQEMDLNDDWRLSKHEVKVYLQKEFEK) is the EF-hand 1 domain. Residues D148, N150, D152, R154, and E159 each coordinate Ca(2+). A glycan (N-linked (GlcNAc...) asparagine) is linked at N176. Residues 179–211 (HHDALVEDIFDKEDEDKDGFISAREFTYVHDEL) form the EF-hand 2 domain. Residues D192, D194, D196, and E203 each contribute to the Ca(2+) site. Residues 208 to 211 (HDEL) carry the Prevents secretion from ER motif.

In terms of assembly, monomer. Homodimer. Interacts with type III, type IV and type X collagens.

The protein resides in the endoplasmic reticulum lumen. It catalyses the reaction [protein]-peptidylproline (omega=180) = [protein]-peptidylproline (omega=0). With respect to regulation, inhibited by tacrolimus/FK506. Functionally, PPIase which accelerates the folding of proteins during protein synthesis. Has a preference for substrates containing 4-hydroxylproline modifications, including type III collagen. May also target type VI and type X collagens. In Mus musculus (Mouse), this protein is Peptidyl-prolyl cis-trans isomerase FKBP14 (Fkbp14).